Consider the following 363-residue polypeptide: Glutamate 5-kinase (363 aa).

Residue K6 coordinates ATP. 3 residues coordinate substrate: S46, D133, and N145. Residues T165 to D166 and T207 to K213 contribute to the ATP site. One can recognise a PUA domain in the interval H271–T349.

Belongs to the glutamate 5-kinase family.

Its subcellular location is the cytoplasm. The catalysed reaction is L-glutamate + ATP = L-glutamyl 5-phosphate + ADP. It functions in the pathway amino-acid biosynthesis; L-proline biosynthesis; L-glutamate 5-semialdehyde from L-glutamate: step 1/2. Catalyzes the transfer of a phosphate group to glutamate to form L-glutamate 5-phosphate. This chain is Glutamate 5-kinase, found in Deinococcus radiodurans (strain ATCC 13939 / DSM 20539 / JCM 16871 / CCUG 27074 / LMG 4051 / NBRC 15346 / NCIMB 9279 / VKM B-1422 / R1).